A 247-amino-acid chain; its full sequence is UPF0280 protein MmarC6_1437 (247 aa).

This sequence belongs to the UPF0280 family.

In Methanococcus maripaludis (strain C6 / ATCC BAA-1332), this protein is UPF0280 protein MmarC6_1437.